The sequence spans 570 residues: Dihydroxy-acid dehydratase (570 aa).

The tract at residues 1–25 (MSQQDSPANADHRRRHSSIVVDGPG) is disordered. Residue Cys-60 participates in [2Fe-2S] cluster binding. Asp-92 contributes to the Mg(2+) binding site. Residue Cys-133 participates in [2Fe-2S] cluster binding. Asp-134 and Lys-135 together coordinate Mg(2+). N6-carboxylysine is present on Lys-135. Cys-202 provides a ligand contact to [2Fe-2S] cluster. Glu-453 contributes to the Mg(2+) binding site. Ser-479 serves as the catalytic Proton acceptor.

It belongs to the IlvD/Edd family. As to quaternary structure, homodimer. The cofactor is [2Fe-2S] cluster. Mg(2+) serves as cofactor.

It carries out the reaction (2R)-2,3-dihydroxy-3-methylbutanoate = 3-methyl-2-oxobutanoate + H2O. The catalysed reaction is (2R,3R)-2,3-dihydroxy-3-methylpentanoate = (S)-3-methyl-2-oxopentanoate + H2O. It participates in amino-acid biosynthesis; L-isoleucine biosynthesis; L-isoleucine from 2-oxobutanoate: step 3/4. It functions in the pathway amino-acid biosynthesis; L-valine biosynthesis; L-valine from pyruvate: step 3/4. Functionally, functions in the biosynthesis of branched-chain amino acids. Catalyzes the dehydration of (2R,3R)-2,3-dihydroxy-3-methylpentanoate (2,3-dihydroxy-3-methylvalerate) into 2-oxo-3-methylpentanoate (2-oxo-3-methylvalerate) and of (2R)-2,3-dihydroxy-3-methylbutanoate (2,3-dihydroxyisovalerate) into 2-oxo-3-methylbutanoate (2-oxoisovalerate), the penultimate precursor to L-isoleucine and L-valine, respectively. The protein is Dihydroxy-acid dehydratase of Chromohalobacter salexigens (strain ATCC BAA-138 / DSM 3043 / CIP 106854 / NCIMB 13768 / 1H11).